An 881-amino-acid chain; its full sequence is Nitrate reductase [NADH] 1 (881 aa).

The interval 1–46 (MAASVEHRPFTSHQHGVVRSFKSYPDVPRPKKLPLPQPLSDSTNDN) is disordered. Cys167 is a Mo-molybdopterin binding site. Residues 515–590 (TKSYSLSEVR…LEDYRIGELM (76 aa)) form the Cytochrome b5 heme-binding domain. Residues His550 and His573 each contribute to the heme site. The FAD-binding FR-type domain maps to 625–737 (REKIPCKLLS…KGPLGHIEYT (113 aa)). FAD is bound by residues 677 to 680 (RAYT), 694 to 698 (VVKVY), Phe699, Phe706, 711 to 713 (IMS), and Thr764.

This sequence belongs to the nitrate reductase family. In terms of assembly, homodimer. FAD serves as cofactor. Requires heme as cofactor. It depends on Mo-molybdopterin as a cofactor.

It carries out the reaction nitrite + NAD(+) + H2O = nitrate + NADH + H(+). In terms of biological role, nitrate reductase is a key enzyme involved in the first step of nitrate assimilation in plants, fungi and bacteria. The sequence is that of Nitrate reductase [NADH] 1 (NIA1) from Phaseolus vulgaris (Kidney bean).